The primary structure comprises 87 residues: Small ribosomal subunit protein bS20 (87 aa).

A disordered region spans residues 1–26; the sequence is MANIKSAKKRAIQAEKARKHNASRRS.

The protein belongs to the bacterial ribosomal protein bS20 family.

Binds directly to 16S ribosomal RNA. This Tolumonas auensis (strain DSM 9187 / NBRC 110442 / TA 4) protein is Small ribosomal subunit protein bS20.